The sequence spans 602 residues: NADH-quinone oxidoreductase subunit C/D (602 aa).

Positions 1-192 (MVNNMTDLTA…DPFELTKAKQ (192 aa)) are NADH dehydrogenase I subunit C. Residues 216 to 602 (DFMFLNLGPN…IDFVMSDVDR (387 aa)) are NADH dehydrogenase I subunit D.

The protein in the N-terminal section; belongs to the complex I 30 kDa subunit family. This sequence in the C-terminal section; belongs to the complex I 49 kDa subunit family. In terms of assembly, NDH-1 is composed of 13 different subunits. Subunits NuoB, CD, E, F, and G constitute the peripheral sector of the complex.

The protein resides in the cell inner membrane. It carries out the reaction a quinone + NADH + 5 H(+)(in) = a quinol + NAD(+) + 4 H(+)(out). Functionally, NDH-1 shuttles electrons from NADH, via FMN and iron-sulfur (Fe-S) centers, to quinones in the respiratory chain. The immediate electron acceptor for the enzyme in this species is believed to be ubiquinone. Couples the redox reaction to proton translocation (for every two electrons transferred, four hydrogen ions are translocated across the cytoplasmic membrane), and thus conserves the redox energy in a proton gradient. This chain is NADH-quinone oxidoreductase subunit C/D, found in Klebsiella pneumoniae subsp. pneumoniae (strain ATCC 700721 / MGH 78578).